Consider the following 222-residue polypeptide: Large ribosomal subunit protein uL4 (222 aa).

This sequence belongs to the universal ribosomal protein uL4 family. Part of the 50S ribosomal subunit.

In terms of biological role, one of the primary rRNA binding proteins, this protein initially binds near the 5'-end of the 23S rRNA. It is important during the early stages of 50S assembly. It makes multiple contacts with different domains of the 23S rRNA in the assembled 50S subunit and ribosome. Functionally, forms part of the polypeptide exit tunnel. The chain is Large ribosomal subunit protein uL4 from Methylacidiphilum infernorum (isolate V4) (Methylokorus infernorum (strain V4)).